The sequence spans 464 residues: GPI mannosyltransferase 2 (464 aa).

Residues 1-70 (MYYIGHPSYY…MTRSGYNYFK (70 aa)) are Cytoplasmic-facing. The chain crosses the membrane as a helical span at residues 71–91 (GICVCTFLLSTILYLGIAVIM). At 92–166 (SHLCVFDDTA…ISFLAFRSKD (75 aa)) the chain is on the lumenal side. 2 N-linked (GlcNAc...) asparagine glycosylation sites follow: N108 and N139. Residues 167-187 (VVLLGIVSCFASIFFHAIACY) form a helical membrane-spanning segment. Residues 188–219 (ALYLLTKSIFSNQKMTAYTVIFYCFSPSGIYM) lie on the Cytoplasmic side of the membrane. The chain crosses the membrane as a helical span at residues 220–240 (SVGYTESLFAAFSFLGLLLFI). Topologically, residues 241-260 (KKQQYPAAFLWSLATLIRSN) are lumenal. The helical transmembrane segment at 261–281 (GIFWCIFFGMPAIGTLKISLE) threads the bilayer. Residues 282–289 (RLQLTFMQ) are Cytoplasmic-facing. Residues 290–309 (VSQLVGYGTKCLIILVPFFY) traverse the membrane as a helical segment. Topologically, residues 310–356 (NQYLGFKLFCPGVAWCNKSLPLIYPAVQEKYWNVGFLRYWTLNNIPN) are lumenal. N-linked (GlcNAc...) asparagine glycosylation occurs at N326. A helical transmembrane segment spans residues 357 to 377 (FLFALLSIIPILFALFYSISG). At 378–388 (STLHSFRSIKS) the chain is on the cytoplasmic side. Residues 389–409 (HLVLSALYLYIGCFHMHTQVL) form a helical membrane-spanning segment. Residues 410–440 (NRMSSALPLLYWSMAHATLYAKSRNLKAFGH) lie on the Lumenal side of the membrane. Residues 441–461 (CILFVWIVYTVIQAGLYGSFL) traverse the membrane as a helical segment. The Cytoplasmic portion of the chain corresponds to 462-464 (PPA).

Belongs to the PIGV family. As to quaternary structure, part of the GPI mannosyltransferase 2 complex composed of gpi18 and C167.09.

Its subcellular location is the endoplasmic reticulum membrane. Its pathway is glycolipid biosynthesis; glycosylphosphatidylinositol-anchor biosynthesis. Its function is as follows. Mannosyltransferase involved in glycosylphosphatidylinositol-anchor biosynthesis. Responsible for the transfer of the second mannose to the glycosylphosphatidylinositol during GPI precursor assembly. In Schizosaccharomyces pombe (strain 972 / ATCC 24843) (Fission yeast), this protein is GPI mannosyltransferase 2 (gpi18).